Reading from the N-terminus, the 276-residue chain is Diaminopimelate epimerase (276 aa).

Substrate-binding residues include asparagine 13, glutamine 46, and asparagine 66. Cysteine 75 acts as the Proton donor in catalysis. Residues 76-77 (GN), asparagine 159, asparagine 192, and 210-211 (ER) each bind substrate. Cysteine 219 (proton acceptor) is an active-site residue. 220–221 (GT) contributes to the substrate binding site.

This sequence belongs to the diaminopimelate epimerase family. In terms of assembly, homodimer.

It localises to the cytoplasm. The enzyme catalyses (2S,6S)-2,6-diaminopimelate = meso-2,6-diaminopimelate. Its pathway is amino-acid biosynthesis; L-lysine biosynthesis via DAP pathway; DL-2,6-diaminopimelate from LL-2,6-diaminopimelate: step 1/1. Catalyzes the stereoinversion of LL-2,6-diaminopimelate (L,L-DAP) to meso-diaminopimelate (meso-DAP), a precursor of L-lysine and an essential component of the bacterial peptidoglycan. The chain is Diaminopimelate epimerase from Stutzerimonas stutzeri (strain A1501) (Pseudomonas stutzeri).